We begin with the raw amino-acid sequence, 335 residues long: Aspartate--ammonia ligase (335 aa).

Belongs to the class-II aminoacyl-tRNA synthetase family. AsnA subfamily.

It is found in the cytoplasm. It catalyses the reaction L-aspartate + NH4(+) + ATP = L-asparagine + AMP + diphosphate + H(+). The protein operates within amino-acid biosynthesis; L-asparagine biosynthesis; L-asparagine from L-aspartate (ammonia route): step 1/1. This Levilactobacillus brevis (strain ATCC 367 / BCRC 12310 / CIP 105137 / JCM 1170 / LMG 11437 / NCIMB 947 / NCTC 947) (Lactobacillus brevis) protein is Aspartate--ammonia ligase.